A 218-amino-acid chain; its full sequence is Probable GTP-binding protein EngB (218 aa).

Residues 31-205 (SGIEIAFAGR…EQKVTSWYAQ (175 aa)) form the EngB-type G domain. Residues 39–46 (GRSNAGKS), 66–70 (GRTQL), 84–87 (DLPG), 151–154 (TKAD), and 184–186 (FSS) each bind GTP. The Mg(2+) site is built by serine 46 and threonine 68.

It belongs to the TRAFAC class TrmE-Era-EngA-EngB-Septin-like GTPase superfamily. EngB GTPase family. Mg(2+) serves as cofactor.

In terms of biological role, necessary for normal cell division and for the maintenance of normal septation. The chain is Probable GTP-binding protein EngB from Psychromonas ingrahamii (strain DSM 17664 / CCUG 51855 / 37).